We begin with the raw amino-acid sequence, 135 residues long: UPF0102 protein Mjls_1965 (135 aa).

The protein belongs to the UPF0102 family.

In Mycobacterium sp. (strain JLS), this protein is UPF0102 protein Mjls_1965.